The chain runs to 1466 residues: MAERANLVFHNKEIDGTGMKRLISRLIDHFGMGYTSHILDQLKTLGFHQATTTSISLGIEDLLTIPSKGWLVQDAEQQSFLLEKHYYYGAIHAVEKLRQSVEIWYATSEYLKQEMNSNFRITDPSNPVYLMSFSGARGNASQVHQLVGMRGLMADPQGQMIDLPIQSNLREGLSLTEYIISCYGARKGVVDTAVRTADAGYLTRRLVEVVQHILVRRRDCGTIQGISVSPQNGMTEKLFAQTLIGRVLADDIYIGSRCIAARNQDIGIGLVNRFITAFRAQPFRAQPIYIRTPFTCRSTSWICQLCYGRSPTHSDLVELGEAVGIIAGQSIGEPGTQLTLRTFHTGGVFTGGTADLVRSPSNGKIQFTENLVHPTRTRHGQPAFLCYIDLHVTIQSQDILYSVSIPSKSLILVQNDQYVKSEQVIAEIRSGTSTLHFKERVQKHIYSESDGEMHWSTDVYHAPEYQYGNLRRLPKTSHLWILSGNICRSSIASFSLHKDQDQMNTYGKKDREIFDYSRSDRIMANGHWNLIYPSIFQDNSDLLAKKRRNRFVIPLQYHQEQEKELISCLGISIEIPFMGVLRRNTIFAYFDDPRYRKDKKGSGIVKFRYRTLEEEYRTREEDLEDEYETLEDEYRTREDEYEYETLEDEYGSPENEYRTLEKDSEDEYGSPESKYRTREGEYGTLEEDSEDGYGNPGESSEDKYGTLEEDLEEDSEDEYDSSEEDSILKKEGLIEHRGTKEFSLKYQKEVDRFFFILQELHILPRSSSLKVLDNSIIGVNTQLTKNTRSRLGGLVRVKRKKSHTELKIFSGDIHFPEEADKVLGGCLIPPERKKKDSKESKKRKNWVYVQRKKILKSKEKYFVFVRPAVAYEMDEGRNLATLFPKDLLQEEENLQLRIVNFISHENSKLTQRIYHTNSQFVRTCLVVNWEQEEKEKAGASLVEVRANNLIRDFLRIELVKSTISYTRKRYDRTSAGPIPHNRLDHTNTNSFYSKAKIESLSQHQEATGTLLNRNKEYQPLMILSASNCSRIGLFKNSKHPNAIKELNPRIPIQEIFGPLGVIVPSTSNFSSSYYLLTHNQSLLKKYLFLANLKQTFQVLQGLKYSLIDENKRVSNFDSNIMLDPLLLNCHFVHHDSWEETLAIIHLGQFICENVCLFKSHIKKSGQIFIVNMDSFVIRAAKPYLATTGATVNGHYGEILYKGDRLVTFIYEKSRSSDITQGLPKVEQIFEARSIDSLSPNLERRIEDWNERIPRILGVPWGFLIGAELTIAQSRISLVNKIQKVYRSQGVQIHNRHIEIIIRQVTSKVRVSEDGMSNVFSPGELIGLLRAERAGRALDESIYYRAILLGITRASLNTQSFISEASFQETARVLAKAALRGRIDWLKGLKENVVLGGIIPVGTGFLKFVHRSPQDKNLYFEIQKQNLFASEMRDFLFLHTELVSSDSDVANNFYETSEPPFTPIYTI.

Zn(2+)-binding residues include C220, C296, C303, and C306. Positions 618-725 (TREEDLEDEY…EDEYDSSEED (108 aa)) are disordered. Acidic residues-rich tracts occupy residues 621 to 631 (EDLEDEYETLE), 639 to 651 (DEYEYETLEDEYG), and 707 to 725 (LEEDLEEDSEDEYDSSEED).

It belongs to the RNA polymerase beta' chain family. RpoC2 subfamily. In terms of assembly, in plastids the minimal PEP RNA polymerase catalytic core is composed of four subunits: alpha, beta, beta', and beta''. When a (nuclear-encoded) sigma factor is associated with the core the holoenzyme is formed, which can initiate transcription. Zn(2+) is required as a cofactor.

The protein resides in the plastid. It localises to the chloroplast. The enzyme catalyses RNA(n) + a ribonucleoside 5'-triphosphate = RNA(n+1) + diphosphate. DNA-dependent RNA polymerase catalyzes the transcription of DNA into RNA using the four ribonucleoside triphosphates as substrates. The protein is DNA-directed RNA polymerase subunit beta'' of Agrostis stolonifera (Creeping bentgrass).